Here is a 37-residue protein sequence, read N- to C-terminus: Potassium channel toxin alpha-KTx 1.11 (37 aa).

Disulfide bonds link cysteine 7-cysteine 28, cysteine 13-cysteine 33, and cysteine 17-cysteine 35.

Belongs to the short scorpion toxin superfamily. Potassium channel inhibitor family. Alpha-KTx 01 subfamily. As to expression, expressed by the venom gland.

It is found in the secreted. Functionally, reversibly blocks the high conductance calcium-activated potassium channels composed of only alpha subunits (KCa1.1/KCNMA1). Unreversibly blocks the high conductance calcium-activated potassium channels composed of alpha and beta1 subunits (KCNMA1 and KCNMB1). Unreversibly and weakly blocks the high conductance calcium-activated potassium channels composed of alpha and beta4 (KCNMA1 and KCNMB4). In Centruroides noxius (Mexican scorpion), this protein is Potassium channel toxin alpha-KTx 1.11.